Consider the following 703-residue polypeptide: MAANMYRVGDYVYFENSSSNPYLIRRIEELNKTANGNVEAKVVCFYRRRDISSSLIALADKHATLSVCYRAGPGADTGEEGEVEEEVENPEMVDLPEKLKHQLRHRELFLSRQLESLPATHIRGKCSVTLLNETESLKSYLEREDFFFYSLVYDPQQKTLLADKGEIRVGNRYQADITDLLKDGEEDGRDQSKLETKVWEAHNPLVDKQIDQFLVVARSVGTFARALDCSSSVRQPSLHMSAAAASRDITLFHAMDTLHKNIYDISKAISALVPQGGPVLCRDEMEEWSASEANLFEEALEKYGKDFTDIQQDFLPWKSLTSIIEYYYMWKTTDRYVQQKRLKAAEAESKLKQVYIPNYNKPNPNQISVNSVKASVVNGTGTPGQSPGAGRACESCYTTQSYQWYSWGPPNMQCRLCASCWTYWKKYGGLKMPTRLDGERPGPNRNNMSPHGIPARSSGSPKFAMKTRQAFYLHTTKLTRIARRLCREILRPWHAARHPYMPINSAAIKAECTARLPEASQSPLVLKQVVRKPLEAVLRYLETHPRPPKPDPVKSSSSVLSSLTPAKSAPVINNGSPTILGKRSYEQHNGVDGLANHGQTRHMGPSRNLLLNGKSYPTKVRLIRGGSLPPVKRRRMNWIDAPDDVFYMATEETRKIRKLLSSSETKRAARRPYKPIALRQSQALPLRPPPPAPVNDEPIVIED.

A BAH domain is found at 1–164 (MAANMYRVGD…PQQKTLLADK (164 aa)). The 112-residue stretch at 165–276 (GEIRVGNRYQ…KAISALVPQG (112 aa)) folds into the ELM2 domain. Lys182 is covalently cross-linked (Glycyl lysine isopeptide (Lys-Gly) (interchain with G-Cter in ubiquitin)). The 53-residue stretch at 283–335 (DEMEEWSASEANLFEEALEKYGKDFTDIQQDFLPWKSLTSIIEYYYMWKTTDR) folds into the SANT domain. Ser386 carries the post-translational modification Phosphoserine. The segment at 393 to 420 (CESCYTTQSYQWYSWGPPNMQCRLCASC) adopts a GATA-type; atypical zinc-finger fold. The tract at residues 437-460 (DGERPGPNRNNMSPHGIPARSSGS) is disordered. Ser449 carries the post-translational modification Phosphoserine. Residue Lys509 forms a Glycyl lysine isopeptide (Lys-Gly) (interchain with G-Cter in SUMO2 and SUMO3) linkage. Ser522 bears the Phosphoserine mark. Residues 542–552 (ETHPRPPKPDP) show a composition bias toward basic and acidic residues. Residues 542-583 (ETHPRPPKPDPVKSSSSVLSSLTPAKSAPVINNGSPTILGKR) are disordered. Positions 545 to 552 (PRPPKPDP) match the SH3-binding motif. Lys549 participates in a covalent cross-link: Glycyl lysine isopeptide (Lys-Gly) (interchain with G-Cter in SUMO2). Over residues 553 to 565 (VKSSSSVLSSLTP) the composition is skewed to low complexity. Residue Thr564 is modified to Phosphothreonine. Phosphoserine is present on Ser576. Thr578 is subject to Phosphothreonine. Position 614 is an N6-acetyllysine; alternate (Lys614). Lys614 is covalently cross-linked (Glycyl lysine isopeptide (Lys-Gly) (interchain with G-Cter in ubiquitin); alternate). Ser627 carries the post-translational modification Phosphoserine. The tract at residues 644 to 674 (DVFYMATEETRKIRKLLSSSETKRAARRPYK) is interaction with RBBP4. The tract at residues 661–703 (SSSETKRAARRPYKPIALRQSQALPLRPPPPAPVNDEPIVIED) is disordered. An SH3-binding motif is present at residues 684–693 (LPLRPPPPAP). Positions 699 to 703 (IVIED) match the SUMO interaction motif 1 (SIM); crucial for efficient sumoylation motif.

It belongs to the metastasis-associated protein family. In terms of assembly, component of the nucleosome remodeling and deacetylase (NuRD) repressor complex, composed of core proteins MTA1, MTA2, MTA3, RBBP4, RBBP7, HDAC1, HDAC2, MBD2, MBD3, and peripherally associated proteins CDK2AP1, CDK2AP2, GATAD2A, GATAD2B, CHD3, CHD4 and CHD5. The exact stoichiometry of the NuRD complex is unknown, and some subunits such as MBD2 and MBD3, GATAD2A and GATAD2B, and CHD3, CHD4 and CHD5 define mutually exclusive NuRD complexes. Interacts with RBBP4; the interaction is direct. Interacts with BMAL1. Interacts with CLOCK. Interacts with COP1. Interacts with CSNK1G2 in the cytoplasm. Interacts with EP300. Interacts with HDAC2. Interacts with ITGB3BP/CENPR. Interacts with MBD3L2. Interacts with MDM2. Interacts with NACC2. Interacts with p53/TP53. Interacts with PIAS1. Interacts with PIAS3. Interacts with PIAS4. Interacts with PWWP2A. Interacts with PWWP2B. Interacts with SENP1. Interacts with SENP2. Interacts with SIX3; facilitates the binding of SIX3 to the core DNA motif of SIX3 promoter. Interacts with SUMO1. Interacts with SUMO2. Interacts with TFCP2L1; which is indispensable for TFCP2L1-mediated self-renewal-promoting effect and endoderm-inhibiting action. Interacts with TFAP2C. Interacts with TPR. Interacts with UBE2I/UBC9. In terms of processing, phosphorylation by CSNK1G2/CK1 triggered by estrogen enhances corepression of estrogen receptor (ER). Post-translationally, acetylation is essential for its transcriptional coactivator activity. Sumoylation positively regulates its transcriptional corepressor activity but does not affect the protein stability. Sumoylated preferentially by SUMO2 or SUMO3 than SUMO1. Sumoylation is enhanced by PIAS1/3/4 and preferentially sumoylated by SUMO2 in the presence of PIAS1/3/4. Desumoylated by SENP1. In terms of processing, ubiquitinated by COP1, which leads to proteasomal degradation. As to expression, isoform 1 abundant in testis and expressed at low levels in brain, heart, lung, liver, and kidney. Isoform 2 abundant in adrenal gland, brain, colon, heart, liver, lung, muscle, prostate, stomach, testis, and thymus and expressed at low levels in duodenum, kidney, pancreas, parotid, and spleen.

It localises to the nucleus. The protein localises to the nucleus envelope. It is found in the cytoplasm. The protein resides in the cytoskeleton. Its subcellular location is the rough endoplasmic reticulum. It localises to the golgi apparatus. The protein localises to the zymogen granule. Its function is as follows. Transcriptional coregulator which can act as both a transcriptional corepressor and coactivator. Acts as a component of the histone deacetylase NuRD complex which participates in the remodeling of chromatin. In the NuRD complex, regulates transcription of its targets by modifying the acetylation status of the target chromatin and cofactor accessibility to the target DNA. In conjunction with other components of NuRD, acts as a transcriptional corepressor of BRCA1, ESR1, TFF1 and CDKN1A. Acts as a transcriptional coactivator of BCAS3, and SUMO2, independent of the NuRD complex. Stimulates the expression of WNT1 by inhibiting the expression of its transcriptional corepressor SIX3. Regulates p53-dependent and -independent DNA repair processes following genotoxic stress. Regulates the stability and function of p53/TP53 by inhibiting its ubiquitination by COP1 and MDM2 thereby regulating the p53-dependent DNA repair. Plays a role in the regulation of the circadian clock and is essential for the generation and maintenance of circadian rhythms under constant light and for normal entrainment of behavior to light-dark (LD) cycles. Positively regulates the CLOCK-BMAL1 heterodimer mediated transcriptional activation of its own transcription and the transcription of CRY1. Regulates deacetylation of BMAL1 by regulating SIRT1 expression, resulting in derepressing CRY1-mediated transcription repression. With TFCP2L1, promotes establishment and maintenance of pluripotency in embryonic stem cells (ESCs) and inhibits endoderm differentiation. The sequence is that of Metastasis-associated protein MTA1 (Mta1) from Rattus norvegicus (Rat).